The following is a 142-amino-acid chain: MGNGKFAARKLKRDANNNRWHDTGYARRQLGLDVKADPLEGAPQGRGIVLEKVGVEAKQPNSAIRKCVRVQLIKNGRQVTAFAVGDGAINFIDEHDEVEIEGIGGRLGRSKGDIPGVRFVVTKVNNVSLREMVTGRKEKPRR.

The protein belongs to the universal ribosomal protein uS12 family. Part of the 30S ribosomal subunit.

Functionally, with S4 and S5 plays an important role in translational accuracy. Located at the interface of the 30S and 50S subunits. This Methanoculleus marisnigri (strain ATCC 35101 / DSM 1498 / JR1) protein is Small ribosomal subunit protein uS12.